The chain runs to 407 residues: MIGFEIFLAIGMFTAIVLGLVAIILVARAKLVSSGDVTIQINGEHSLTVPAGGKLLQTLAANNVFLSSACGGGGTCAQCKCVVVDGGGEMLPTEESHFTRRQAKEGWRLSCQTPVKQDMQIRVPEEVFGVKKWECTVESNPNVATFIKELTLRLPDGESVDFRAGGYVQLECPPHVVEYKDFDIQPEYRGDWDKFNMWRYVSKVDETVIRAYSMANYPEEKGVVKFNIRIASPPPGSDLPPGQMSSWVFNLKPGDKVTVYGPFGEFFAKDTEAEMVFIGGGAGMAPMRSHIFDQLRRLRSTRKISFWYGARSLREAFYTEEYDQLQAENPNFQWHLALSDPQPEDNWTGLTGFIHNVLFENYLKDHPAPEDCEFYMCGPPMMNAAVIKMLTDLGVERENILLDDFGG.

A helical transmembrane segment spans residues 6-26 (IFLAIGMFTAIVLGLVAIILV). One can recognise a 2Fe-2S ferredoxin-type domain in the interval 35–127 (GDVTIQINGE…DMQIRVPEEV (93 aa)). Positions 70, 76, 79, and 111 each coordinate [2Fe-2S] cluster. One can recognise an FAD-binding FR-type domain in the interval 130-269 (VKKWECTVES…YGPFGEFFAK (140 aa)).

This sequence belongs to the NqrF family. In terms of assembly, composed of six subunits; NqrA, NqrB, NqrC, NqrD, NqrE and NqrF. [2Fe-2S] cluster serves as cofactor. Requires FAD as cofactor.

The protein localises to the cell inner membrane. The enzyme catalyses a ubiquinone + n Na(+)(in) + NADH + H(+) = a ubiquinol + n Na(+)(out) + NAD(+). In terms of biological role, NQR complex catalyzes the reduction of ubiquinone-1 to ubiquinol by two successive reactions, coupled with the transport of Na(+) ions from the cytoplasm to the periplasm. The first step is catalyzed by NqrF, which accepts electrons from NADH and reduces ubiquinone-1 to ubisemiquinone by a one-electron transfer pathway. The protein is Na(+)-translocating NADH-quinone reductase subunit F of Pseudomonas paraeruginosa (strain DSM 24068 / PA7) (Pseudomonas aeruginosa (strain PA7)).